A 611-amino-acid polypeptide reads, in one-letter code: Probable methyltransferase PMT19 (611 aa).

Over 1-15 (MNPSQQHLPKLCPKR) the chain is Cytoplasmic. Residues 16–36 (LFLFFTPFLLFSLYYILTTIK) form a helical; Signal-anchor for type II membrane protein membrane-spanning segment. Topologically, residues 37-611 (TITISSQDRH…TILIVDNSIK (575 aa)) are lumenal. N-linked (GlcNAc...) asparagine glycosylation is found at asparagine 68, asparagine 97, asparagine 289, asparagine 408, asparagine 411, and asparagine 587.

The protein belongs to the methyltransferase superfamily.

The protein localises to the endoplasmic reticulum membrane. This Arabidopsis thaliana (Mouse-ear cress) protein is Probable methyltransferase PMT19.